The sequence spans 365 residues: Mannonate dehydratase 1 (365 aa).

It belongs to the mannonate dehydratase family. It depends on Fe(2+) as a cofactor. Requires Mn(2+) as cofactor.

The catalysed reaction is D-mannonate = 2-dehydro-3-deoxy-D-gluconate + H2O. The protein operates within carbohydrate metabolism; pentose and glucuronate interconversion. Its function is as follows. Catalyzes the dehydration of D-mannonate. The protein is Mannonate dehydratase 1 of Bacillus licheniformis (strain ATCC 14580 / DSM 13 / JCM 2505 / CCUG 7422 / NBRC 12200 / NCIMB 9375 / NCTC 10341 / NRRL NRS-1264 / Gibson 46).